The sequence spans 426 residues: MASPAPLQRLQAPLRRSLARAAVLSSRTYATIPSPSDPGLTQSSPSPAASTTPAKKAPRPSYFKDTTVASFSEFVGSQSAPLSLSEAYEIKTAEVGPAGRKRTITRLPEWLKTPIPSSGANPNFGKIKADLRGLNLHTVCEEARCPNIGECWGGNDKSAATATIMLMGDTCTRGCRFCSVKTNRKPPPLDPHEPENTAEALARWGLGYVVLTSVDRDDLADGGARHFAETIRRIKQKKPTLLVEALTGDFMGDLDMVKIVAESGLDVYAHNVETVEGLTPYVRDRRATFRQSLKVLEHVKAVRGKEGIITKTSIMLGLGEQEQEIWDTLRELRKIDVDVVTFGQYMRPTKRHLKVEKYVTPDEFDLWKQRALDMGFLYCASGPLVRSSYKAGEAFIENVLRKRAGERAAASASLDQVVAAEETKAL.

The transit peptide at methionine 1–tyrosine 29 directs the protein to the mitochondrion. The segment covering arginine 27–glutamine 42 has biased composition (polar residues). The segment at arginine 27 to serine 61 is disordered. The span at serine 43–lysine 55 shows a compositional bias: low complexity. Residues cysteine 140, cysteine 145, cysteine 151, cysteine 171, cysteine 175, cysteine 178, and serine 388 each contribute to the [4Fe-4S] cluster site. The Radical SAM core domain occupies glycine 154–leucine 377.

Belongs to the radical SAM superfamily. Lipoyl synthase family. Requires [4Fe-4S] cluster as cofactor.

The protein localises to the mitochondrion. The catalysed reaction is [[Fe-S] cluster scaffold protein carrying a second [4Fe-4S](2+) cluster] + N(6)-octanoyl-L-lysyl-[protein] + 2 oxidized [2Fe-2S]-[ferredoxin] + 2 S-adenosyl-L-methionine + 4 H(+) = [[Fe-S] cluster scaffold protein] + N(6)-[(R)-dihydrolipoyl]-L-lysyl-[protein] + 4 Fe(3+) + 2 hydrogen sulfide + 2 5'-deoxyadenosine + 2 L-methionine + 2 reduced [2Fe-2S]-[ferredoxin]. It functions in the pathway protein modification; protein lipoylation via endogenous pathway; protein N(6)-(lipoyl)lysine from octanoyl-[acyl-carrier-protein]: step 2/2. Its function is as follows. Catalyzes the radical-mediated insertion of two sulfur atoms into the C-6 and C-8 positions of the octanoyl moiety bound to the lipoyl domains of lipoate-dependent enzymes, thereby converting the octanoylated domains into lipoylated derivatives. The protein is Lipoyl synthase, mitochondrial of Podospora anserina (strain S / ATCC MYA-4624 / DSM 980 / FGSC 10383) (Pleurage anserina).